The primary structure comprises 188 residues: UPF0301 protein PsycPRwf_0144 (188 aa).

The protein belongs to the UPF0301 (AlgH) family.

In Psychrobacter sp. (strain PRwf-1), this protein is UPF0301 protein PsycPRwf_0144.